A 545-amino-acid chain; its full sequence is Glucose-6-phosphate isomerase (545 aa).

Catalysis depends on glutamate 351, which acts as the Proton donor. Residues histidine 382 and lysine 510 contribute to the active site.

The protein belongs to the GPI family.

It localises to the cytoplasm. It catalyses the reaction alpha-D-glucose 6-phosphate = beta-D-fructose 6-phosphate. Its pathway is carbohydrate biosynthesis; gluconeogenesis. The protein operates within carbohydrate degradation; glycolysis; D-glyceraldehyde 3-phosphate and glycerone phosphate from D-glucose: step 2/4. Functionally, catalyzes the reversible isomerization of glucose-6-phosphate to fructose-6-phosphate. The sequence is that of Glucose-6-phosphate isomerase from Shewanella woodyi (strain ATCC 51908 / MS32).